We begin with the raw amino-acid sequence, 530 residues long: Histone-arginine methyltransferase CARMER (530 aa).

In terms of domain architecture, SAM-dependent MTase PRMT-type spans 141 to 450 (ASQYFQFYGY…QSYDVTIDLH (310 aa)). Residues Gln154, Arg163, Gly187, Glu209, Glu238, and Thr266 each contribute to the S-adenosyl-L-methionine site. The residue at position 501 (Arg501) is an Asymmetric dimethylarginine; by autocatalysis.

The protein belongs to the class I-like SAM-binding methyltransferase superfamily. Protein arginine N-methyltransferase family. In terms of assembly, homodimer. The dimethylated protein is the major form.

The protein resides in the cytoplasm. It localises to the nucleus. It carries out the reaction L-arginyl-[protein] + 2 S-adenosyl-L-methionine = N(omega),N(omega)-dimethyl-L-arginyl-[protein] + 2 S-adenosyl-L-homocysteine + 2 H(+). Its function is as follows. Methylates (mono- and asymmetric dimethylation) the guanidino nitrogens of arginyl residues in proteins. May methylate histone H3 at 'Arg-17' and activate transcription via chromatin remodeling. This chain is Histone-arginine methyltransferase CARMER (Art4), found in Drosophila erecta (Fruit fly).